The sequence spans 225 residues: uncharacterized protein (225 aa).

The helical transmembrane segment at isoleucine 181 to phenylalanine 203 threads the bilayer.

The protein localises to the cell membrane. This is an uncharacterized protein from Bacillus anthracis.